The chain runs to 24 residues: Glutamate dehydrogenase (24 aa).

It belongs to the Glu/Leu/Phe/Val dehydrogenases family. Homohexamer.

The protein localises to the cytoplasm. The catalysed reaction is L-glutamate + NAD(+) + H2O = 2-oxoglutarate + NH4(+) + NADH + H(+). It carries out the reaction L-glutamate + NADP(+) + H2O = 2-oxoglutarate + NH4(+) + NADPH + H(+). This Pyrococcus woesei protein is Glutamate dehydrogenase (gdhA).